A 170-amino-acid polypeptide reads, in one-letter code: Transcription factor E (170 aa).

Residues 1–93 enclose the HTH TFE/IIEalpha-type domain; the sequence is MKDVYLYIVE…TWYVDDEIIK (93 aa).

This sequence belongs to the TFE family. Monomer. Interaction with RNA polymerase subunits RpoF and RpoE is necessary for Tfe stimulatory transcription activity. Able to interact with Tbp and RNA polymerase in the absence of DNA promoter. Interacts both with the preinitiation and elongation complexes.

In terms of biological role, transcription factor that plays a role in the activation of archaeal genes transcribed by RNA polymerase. Facilitates transcription initiation by enhancing TATA-box recognition by TATA-box-binding protein (Tbp), and transcription factor B (Tfb) and RNA polymerase recruitment. Not absolutely required for transcription in vitro, but particularly important in cases where Tbp or Tfb function is not optimal. It dynamically alters the nucleic acid-binding properties of RNA polymerases by stabilizing the initiation complex and destabilizing elongation complexes. Seems to translocate with the RNA polymerase following initiation and acts by binding to the non template strand of the transcription bubble in elongation complexes. The protein is Transcription factor E of Pyrobaculum aerophilum (strain ATCC 51768 / DSM 7523 / JCM 9630 / CIP 104966 / NBRC 100827 / IM2).